Here is a 100-residue protein sequence, read N- to C-terminus: Integration host factor subunit alpha (100 aa).

This sequence belongs to the bacterial histone-like protein family. Heterodimer of an alpha and a beta chain.

In terms of biological role, this protein is one of the two subunits of integration host factor, a specific DNA-binding protein that functions in genetic recombination as well as in transcriptional and translational control. This Caulobacter sp. (strain K31) protein is Integration host factor subunit alpha.